The primary structure comprises 529 residues: Bifunctional purine biosynthesis protein PurH (529 aa).

The region spanning 1 to 148 is the MGS-like domain; it reads MQQRRPVRRA…KNHKDVAIVV (148 aa). Lysine 287 bears the N6-acetyllysine mark.

The protein belongs to the PurH family.

It catalyses the reaction (6R)-10-formyltetrahydrofolate + 5-amino-1-(5-phospho-beta-D-ribosyl)imidazole-4-carboxamide = 5-formamido-1-(5-phospho-D-ribosyl)imidazole-4-carboxamide + (6S)-5,6,7,8-tetrahydrofolate. The enzyme catalyses IMP + H2O = 5-formamido-1-(5-phospho-D-ribosyl)imidazole-4-carboxamide. It participates in purine metabolism; IMP biosynthesis via de novo pathway; 5-formamido-1-(5-phospho-D-ribosyl)imidazole-4-carboxamide from 5-amino-1-(5-phospho-D-ribosyl)imidazole-4-carboxamide (10-formyl THF route): step 1/1. The protein operates within purine metabolism; IMP biosynthesis via de novo pathway; IMP from 5-formamido-1-(5-phospho-D-ribosyl)imidazole-4-carboxamide: step 1/1. The chain is Bifunctional purine biosynthesis protein PurH from Escherichia coli O17:K52:H18 (strain UMN026 / ExPEC).